The primary structure comprises 483 residues: FAD-dependent oxidoreductase oblC (483 aa).

An N-terminal signal peptide occupies residues 1 to 21 (MRSVTSLVSFSACLLASSVTA). Asparagine 100, asparagine 137, asparagine 190, and asparagine 240 each carry an N-linked (GlcNAc...) asparagine glycan.

It belongs to the beta-cyclopiazonate dehydrogenase family. Requires FAD as cofactor.

Its pathway is secondary metabolite biosynthesis; terpenoid biosynthesis. Its function is as follows. FAD-dependent oxidoreductase; part of the gene cluster that mediates the biosynthesis of the sesterterpenes ophiobolins, fungal phytotoxins with potential anti-cancer activities. The first step of the pathway is performed by the sesterterpene synthase oblA that possesses both prenyl transferase and terpene cyclase activity, converting isopentenyl diphosphate and dimethylallyl diphosphate into geranylfarnesyl diphosphate (GFPP) and further converting GFPP into ophiobolin F, respectively. Other sesterterpenoids (C(25) terpenoids) are found as minor products of oblA. The cytochrome P450 monooxygenase oblB then catalyzes a four-step oxidative transformation of ophiobolin F to yield ophiobolin C. The FAD-dependent oxidoreductase oblC might be involved in a later oxidation step that produces ophiobolin A. In Cochliobolus heterostrophus (strain C5 / ATCC 48332 / race O) (Southern corn leaf blight fungus), this protein is FAD-dependent oxidoreductase oblC.